The chain runs to 361 residues: Hydroxycarboxylate dehydrogenase B (361 aa).

NAD(+) contacts are provided by residues histidine 48, 122-124, 178-182, histidine 234, asparagine 270, and 313-316; these read GRI, LLDYA, and GEWE.

The protein belongs to the LDH2/MDH2 oxidoreductase family.

The enzyme catalyses 2-hydroxyglutarate + NADP(+) = 2-oxoglutarate + NADPH + H(+). The catalysed reaction is 2-hydroxyglutarate + NAD(+) = 2-oxoglutarate + NADH + H(+). It carries out the reaction 3-phenyllactate + NADP(+) = 3-phenylpyruvate + NADPH + H(+). It catalyses the reaction 3-phenyllactate + NAD(+) = 3-phenylpyruvate + NADH + H(+). The enzyme catalyses (2R)-2-hydroxy-3-(4-hydroxyphenyl)propanoate + NAD(+) = 3-(4-hydroxyphenyl)pyruvate + NADH + H(+). The catalysed reaction is (2R)-2-hydroxy-3-(4-hydroxyphenyl)propanoate + NADP(+) = 3-(4-hydroxyphenyl)pyruvate + NADPH + H(+). It carries out the reaction (2R)-3-(3,4-dihydroxyphenyl)lactate + NADP(+) = 3-(3,4-dihydroxyphenyl)pyruvate + NADPH + H(+). It catalyses the reaction (2R)-3-(3,4-dihydroxyphenyl)lactate + NAD(+) = 3-(3,4-dihydroxyphenyl)pyruvate + NADH + H(+). Its function is as follows. Catalyzes the NAD(P)H-dependent reduction of 2-oxoglutarate, phenylpyruvate and (4-hydroxyphenyl)pyruvate, leading to the respective 2-hydroxycarboxylate in vitro. Shows a preference for NADPH over NADH as a redox partner. Do not catalyze the reverse reactions. This chain is Hydroxycarboxylate dehydrogenase B, found in Escherichia coli (strain K12).